We begin with the raw amino-acid sequence, 127 residues long: MSKPIYVRFEVPEDLAEKAYEAVKRARETGRIKKGTNETTKAVERGLAKLVVIAEDVDPPEIVMHLPLLCDEKKIPYVYVPSKKRLGEAAGIEVAAASVAIIEPGDAETLVREIVEKVKELRAKAGV.

Belongs to the eukaryotic ribosomal protein eL8 family. Part of the 50S ribosomal subunit. Probably part of the RNase P complex.

It is found in the cytoplasm. Its function is as follows. Multifunctional RNA-binding protein that recognizes the K-turn motif in ribosomal RNA, the RNA component of RNase P, box H/ACA, box C/D and box C'/D' sRNAs. The chain is Large ribosomal subunit protein eL8 from Aeropyrum pernix (strain ATCC 700893 / DSM 11879 / JCM 9820 / NBRC 100138 / K1).